A 257-amino-acid chain; its full sequence is UPF0758 protein Bcenmc03_2526 (257 aa).

Residues M1–G53 form a disordered region. A compositionally biased stretch (basic and acidic residues) spans P37–E51. The MPN domain maps to Q135 to L257. The Zn(2+) site is built by H206, H208, and D219. A JAMM motif motif is present at residues H206–D219.

This sequence belongs to the UPF0758 family.

In Burkholderia orbicola (strain MC0-3), this protein is UPF0758 protein Bcenmc03_2526.